The chain runs to 652 residues: Serine/threonine-protein kinase ssp1 (652 aa).

Tyr-58 is modified (phosphotyrosine). Position 59 is a phosphoserine (Ser-59). Tyr-63 carries the phosphotyrosine modification. A Protein kinase domain is found at 135 to 409; it reads YEIIKELGRG…LVEVKLHPWT (275 aa). ATP-binding positions include 141–149 and Lys-164; that span reads LGRGMHGKV. Asp-267 acts as the Proton acceptor in catalysis. 2 disordered regions span residues 467–491 and 506–529; these read DSSS…SIGL and NESQ…SSEK. Over residues 508-518 the composition is skewed to basic and acidic residues; it reads SQKDRERKQVH.

Belongs to the protein kinase superfamily. Ser/Thr protein kinase family.

It is found in the cytoplasm. The catalysed reaction is L-seryl-[protein] + ATP = O-phospho-L-seryl-[protein] + ADP + H(+). It carries out the reaction L-threonyl-[protein] + ATP = O-phospho-L-threonyl-[protein] + ADP + H(+). Involved in actin localization and thus in polarized cell growth. The sequence is that of Serine/threonine-protein kinase ssp1 (ssp1) from Schizosaccharomyces pombe (strain 972 / ATCC 24843) (Fission yeast).